Reading from the N-terminus, the 340-residue chain is Cytoskeleton protein RodZ (340 aa).

The Cytoplasmic portion of the chain corresponds to 1–111 (MNTEATQEKS…LGKQRKKRDG (111 aa)). An HTH cro/C1-type domain is found at 19 to 79 (LRTAREQMGL…RLVHVPEEEL (61 aa)). Residues 30–49 (QQNVAERLCLKLSTIRDIEE) constitute a DNA-binding region (H-T-H motif). Residues 112–132 (WLMIFTWLVLFVVLGLTGAWW) traverse the membrane as a helical; Signal-anchor for type II membrane protein segment. Topologically, residues 133–340 (WQNHKAAQDD…QVARLTVGAP (208 aa)) are periplasmic. Positions 162–252 (ALSDDNANGG…AAPLPTGSAA (91 aa)) are disordered. A compositionally biased stretch (polar residues) spans 183-201 (ATANNAPSSVTATSDNGTP). Residues 202–233 (AATAQSSQVTASNAAPAANAVNDNTPPVAVAP) show a composition bias toward low complexity.

It belongs to the RodZ family.

The protein resides in the cell inner membrane. In terms of biological role, cytoskeletal protein that is involved in cell-shape control through regulation of the length of the long axis. This is Cytoskeleton protein RodZ from Erwinia tasmaniensis (strain DSM 17950 / CFBP 7177 / CIP 109463 / NCPPB 4357 / Et1/99).